The primary structure comprises 769 residues: Probable beta-glucosidase M (769 aa).

Residues 1-22 form the signal peptide; that stretch reads MHSNVGLAGLAGLLATASVCLS. N-linked (GlcNAc...) asparagine glycosylation is found at Asn28, Asn75, and Asn262. Asp290 is an active-site residue. N-linked (GlcNAc...) asparagine glycans are attached at residues Asn318, Asn325, Asn396, Asn437, Asn510, Asn546, and Asn625.

This sequence belongs to the glycosyl hydrolase 3 family.

It localises to the secreted. It carries out the reaction Hydrolysis of terminal, non-reducing beta-D-glucosyl residues with release of beta-D-glucose.. It functions in the pathway glycan metabolism; cellulose degradation. In terms of biological role, beta-glucosidases are one of a number of cellulolytic enzymes involved in the degradation of cellulosic biomass. Catalyzes the last step releasing glucose from the inhibitory cellobiose. The chain is Probable beta-glucosidase M (bglM) from Aspergillus fumigatus (strain CBS 144.89 / FGSC A1163 / CEA10) (Neosartorya fumigata).